Reading from the N-terminus, the 436-residue chain is MPKPVIAIVGRPNVGKSTIFNRIVGERVSIVEDIPGITRDRIYSAGEWLNHEFNIIDTGGIDIGDEPFLTQIRQQAEVAIDEADVIIFMTNGRDGVTAADEEVAKILYRSKKPIVLAVNKVDNPDMRSDIYDFYALGFGEPFPISGTHGLGLGDLLDEAANHFPKIEEEAYDDETIRFSLIGRPNVGKSSLVNALLGQERVIVSNIAGTTRDAVDTPYSKDDQDYVIIDTAGMRKKGKVYESTEKYSVLRALRAIERSDVVLVVLDGEEGIIEQDKKIAGYAHDSGRAVIIVVNKWDAVKKDEKTMKAFEENIRAHFQFLEYAPIVFLSAKTKKRTQTLLPVINEVNESHSIRVQTNVLNDVIMDAVAMNPTPTHNGSRLKIFYATQVAVKPPTFVIFVNDTELMHFSYERFLKNRLREAFGFVGTPIHIIARARD.

2 EngA-type G domains span residues 4–167 (PVIA…PKIE) and 176–351 (IRFS…ESHS). GTP-binding positions include 10 to 17 (GRPNVGKS), 57 to 61 (DTGGI), 119 to 122 (NKVD), 182 to 189 (GRPNVGKS), 229 to 233 (DTAGM), and 294 to 297 (NKWD). A KH-like domain is found at 352-436 (IRVQTNVLND…PIHIIARARD (85 aa)).

It belongs to the TRAFAC class TrmE-Era-EngA-EngB-Septin-like GTPase superfamily. EngA (Der) GTPase family. Associates with the 50S ribosomal subunit.

Functionally, GTPase that plays an essential role in the late steps of ribosome biogenesis. The polypeptide is GTPase Der (Bacillus mycoides (strain KBAB4) (Bacillus weihenstephanensis)).